Reading from the N-terminus, the 157-residue chain is Protein FAM162B (157 aa).

The helical transmembrane segment at 104–123 threads the bilayer; it reads ACYIMIGLTIVACFAVIVSA.

The protein belongs to the UPF0389 family.

It localises to the membrane. The chain is Protein FAM162B (Fam162b) from Mus musculus (Mouse).